The following is a 354-amino-acid chain: uncharacterized protein (354 aa).

The span at 309-326 shows a compositional bias: polar residues; it reads VNSANSINTANTRSQTGG. The interval 309 to 333 is disordered; that stretch reads VNSANSINTANTRSQTGGQDEEDFE. Positions 326–353 form a coiled coil; it reads GQDEEDFEKKYKKYKNKYAKLKNQKTSN.

The protein localises to the virion. This is an uncharacterized protein from Acanthamoeba polyphaga (Amoeba).